The chain runs to 70 residues: MAFLKKSLFLVLFLGMVSLSICEEEKRENEDEELQEDDEQSEMKRGLWSTIKNVGKEAAIAAGKAALGAL.

The N-terminal stretch at 1-22 (MAFLKKSLFLVLFLGMVSLSIC) is a signal peptide. The propeptide occupies 23–43 (EEEKRENEDEELQEDDEQSEM). Residues 25-44 (EKRENEDEELQEDDEQSEMK) are disordered. Positions 30–40 (EDEELQEDDEQ) are enriched in acidic residues. Position 70 is a leucine amide (L70).

Expressed by the skin glands.

It localises to the secreted. Its function is as follows. Has antibacterial activity against the Gram-negative bacteria E.coli and P.aeruginosa, and the Gram-positive bacteria S.aureus and M.luteus. Has antiprotozoal activity against L.amazonensis. No hemolytic activity. This Pithecopus hypochondrialis (Orange-legged leaf frog) protein is Dermaseptin-H3.